Consider the following 244-residue polypeptide: Inactive chemokine-binding protein (244 aa).

The tract at residues 1-79 (MHVPASLQQS…STSVEDVDPP (79 aa)) is disordered. Over residues 37–53 (QDQTPTNDKICQSVTEI) the composition is skewed to polar residues. The span at 54–77 (TESESDPDPEVESEDDSTSVEDVD) shows a compositional bias: acidic residues.

It belongs to the orthopoxvirus OPG001 family.

It is found in the host cytoplasm. The protein is truncated in this vaccinal strain and presumably inactive, because the lack of signal peptide prevents the protein of being secreted. In the other strains inhibits host immune defense by binding to host chemokines. Binds host CC chemokines (beta chemokines) such as RANTES with high affinity, but not CXC or C chemokines (alpha and gamma chemokines). The chain is Inactive chemokine-binding protein (OPG001) from Vaccinia virus (strain Copenhagen) (VACV).